A 283-amino-acid chain; its full sequence is Shikimate kinase (283 aa).

ATP is bound at residue 86 to 96 (PLKSGLSSSSA).

It belongs to the GHMP kinase family. Archaeal shikimate kinase subfamily.

The protein localises to the cytoplasm. It carries out the reaction shikimate + ATP = 3-phosphoshikimate + ADP + H(+). Its pathway is metabolic intermediate biosynthesis; chorismate biosynthesis; chorismate from D-erythrose 4-phosphate and phosphoenolpyruvate: step 5/7. This is Shikimate kinase from Methanococcus vannielii (strain ATCC 35089 / DSM 1224 / JCM 13029 / OCM 148 / SB).